The chain runs to 148 residues: Small ribosomal subunit protein uS7c (148 aa).

Belongs to the universal ribosomal protein uS7 family. Part of the 30S ribosomal subunit.

It is found in the plastid. It localises to the chloroplast. Its function is as follows. One of the primary rRNA binding proteins, it binds directly to 16S rRNA where it nucleates assembly of the head domain of the 30S subunit. The protein is Small ribosomal subunit protein uS7c (rps7) of Cyanidioschyzon merolae (strain NIES-3377 / 10D) (Unicellular red alga).